We begin with the raw amino-acid sequence, 2813 residues long: A-kinase anchor protein 13 (2813 aa).

2 disordered regions span residues 304–400 (AQDP…QDSC) and 415–439 (LSSCGNRNEETGTKSSGMPTDQESL). A compositionally biased stretch (polar residues) spans 427-439 (TKSSGMPTDQESL). Residues 494–516 (WKNVLQGGESTKERFENSNIGTA) form an important for interaction with PRKAR2A region. Disordered regions lie at residues 539–585 (AASS…VDQN), 632–653 (HQNSETNSSHAQSQKGKSSPIC), and 690–726 (SESTTARQPSSQDPPDASHCEDPQAHTVTSDPVRDTQ). Over residues 561-577 (STEKTAETETSRSREES) the composition is skewed to basic and acidic residues. Polar residues predominate over residues 690-702 (SESTTARQPSSQD). Ser-790 bears the Phosphoserine mark. 2 disordered regions span residues 805-856 (VPSQ…AAEL) and 939-965 (ENALSSGTLQEEQRTPPPGQDTQQFHE). Thr-815 carries the post-translational modification Phosphothreonine. The span at 835 to 844 (PDTRPLEDRA) shows a compositional bias: basic and acidic residues. 2 stretches are compositionally biased toward polar residues: residues 847–856 (LSTSSTAAEL) and 939–948 (ENALSSGTLQ). Phosphothreonine is present on Thr-953. Ser-983 carries the phosphoserine modification. Disordered stretches follow at residues 1431-1455 (GVLKRESGSDSDLFHSPSDDMDSII) and 1467-1542 (DITG…DSIT). A compositionally biased stretch (low complexity) spans 1467-1478 (DITGSSSSTDDT). Over residues 1488–1497 (GSDVSLSQIL) the composition is skewed to polar residues. 5 positions are modified to phosphoserine: Ser-1489, Ser-1507, Ser-1540, Ser-1565, and Ser-1602. The segment covering 1525-1540 (SEPADPGDVEEEEMDS) has biased composition (acidic residues). The tract at residues 1585–1715 (RVLGDVVRRP…HSTFHNTSAN (131 aa)) is important for interaction with MAP2K3. Residues 1601–1638 (FSLEGLTGGAGVGNKPSSSLEVSSANAEELRHPFSGEE) form a disordered region. Residues 1615 to 1626 (KPSSSLEVSSAN) are compositionally biased toward polar residues. Basic and acidic residues predominate over residues 1628–1638 (EELRHPFSGEE). Phosphoserine is present on residues Ser-1642, Ser-1645, and Ser-1647. Lys-1670 carries the post-translational modification N6-methyllysine. A disordered region spans residues 1755–1793 (KMSSSKKSKEKEKEKDKIKEKEKDSKDKEKDKKTVNGHT). A coiled-coil region spans residues 1758–1790 (SSKKSKEKEKEKDKIKEKEKDSKDKEKDKKTVN). Over residues 1761 to 1788 (KSKEKEKEKDKIKEKEKDSKDKEKDKKT) the composition is skewed to basic and acidic residues. Residues 1791-1838 (GHTFSSIPVVGPISCSQCMKPFTNKDAYTCANCSAFVHKGCRESLASC) form a Phorbol-ester/DAG-type zinc finger. A phosphoserine mark is found at Ser-1876, Ser-1895, and Ser-1929. Residues 1919–2813 (MSNTWKFLSH…VSAEGEEIFC (895 aa)) are interaction with ESR1. Thr-1930 is subject to Phosphothreonine. A phosphoserine mark is found at Ser-1932 and Ser-1945. In terms of domain architecture, DH spans 1994–2191 (KRQEVIYELM…KDVIGAVDSK (198 aa)). Residues 2231–2333 (KLVRDGSVFL…WIQIIQDTIN (103 aa)) enclose the PH domain. Residues Ser-2345 and Ser-2398 each carry the phosphoserine modification. Positions 2345–2381 (SENEEEKKMLDTRARELKEQLHQKDQKILLLLEEKEM) form a coiled coil. Residues 2466–2502 (ETFGGFDSHQMNASKGGEKEEGDDGQDLRRTESDSGL) form a disordered region. Residue Thr-2467 is modified to Phosphothreonine. Phosphoserine is present on Ser-2473. A compositionally biased stretch (basic and acidic residues) spans 2491-2502 (QDLRRTESDSGL). Ser-2563 and Ser-2566 each carry phosphoserine. Residues 2568–2683 (LIEQEKQRSL…RLSQRQTERD (116 aa)) adopt a coiled-coil conformation. Residues 2665–2684 (QEQLRREAERLSQRQTERDL) are compositionally biased toward basic and acidic residues. Residues 2665-2813 (QEQLRREAER…VSAEGEEIFC (149 aa)) are disordered. 3 positions are modified to phosphoserine: Ser-2703, Ser-2709, and Ser-2728. The span at 2720 to 2735 (SLDSELSVSPKRNSIS) shows a compositional bias: polar residues. Over residues 2760-2771 (QSQAPASTSAST) the composition is skewed to low complexity.

As to quaternary structure, interacts with the cAMP-dependent protein kinase (PKA) holoenzyme and with the regulatory subunit PRKAR2A. Interacts with RHOA. Also interacts with RHOB and RHOC. Identified in a ternary complex with RHOA and PRKAR2A. Identified in a complex with NR3C1 and RHOA. Interacts with BRAF and KSR1. Identified in a complex with BRAF and KSR1. Component of a signaling complex containing at least AKAP13, PKN1, MAPK14, ZAK and MAP2K3. Within this complex, AKAP13 interacts directly with PKN1, which in turn recruits MAPK14, MAP2K3 and ZAK. Interacts (phosphorylated form) with YWHAB and YWHAZ. Interaction with YWHAB inhibits activation of RHOA, interferes with PKN1 binding and activation of MAP kinases. Interacts with GNA12. Interacts with IKBKB. Interacts with ESR1, THRA, PPARA and NME2. Interacts (via the C-terminal domain after the PH domain) with MEF2C and RXRB. Interacts (via the C-terminal domain after the PH domain) with PRKD1. As to expression, detected in mammary gland. Detected in heart (at protein level). Expressed as a 5.3 kb transcript in hematopoietic cells, skeletal muscle, lung, heart, estrogen-responsive reproductive tissues, including breast ductal epithelium. Also found in testis and breast cancer cell lines. Predominantly expressed as a 10 kb transcript in the heart and at lower levels in the lung, placenta, kidney, pancreas, skeletal muscle and liver. Transcripts of between 6-9 kb are also expressed in myeloid and lymphoid lineages, a variety of epithelial tissues, and in skeletal muscle.

It localises to the cytoplasm. It is found in the cytosol. The protein localises to the cell cortex. The protein resides in the nucleus. Its subcellular location is the membrane. Functionally, scaffold protein that plays an important role in assembling signaling complexes downstream of several types of G protein-coupled receptors. Activates RHOA in response to signaling via G protein-coupled receptors via its function as Rho guanine nucleotide exchange factor. May also activate other Rho family members. Part of a kinase signaling complex that links ADRA1A and ADRA1B adrenergic receptor signaling to the activation of downstream p38 MAP kinases, such as MAPK11 and MAPK14. Part of a signaling complex that links ADRA1B signaling to the activation of RHOA and IKBKB/IKKB, leading to increased NF-kappa-B transcriptional activity. Part of a RHOA-dependent signaling cascade that mediates responses to lysophosphatidic acid (LPA), a signaling molecule that activates G-protein coupled receptors and potentiates transcriptional activation of the glucocorticoid receptor NR3C1. Part of a signaling cascade that stimulates MEF2C-dependent gene expression in response to lysophosphatidic acid (LPA). Part of a signaling pathway that activates MAPK11 and/or MAPK14 and leads to increased transcription activation of the estrogen receptors ESR1 and ESR2. Part of a signaling cascade that links cAMP and EGFR signaling to BRAF signaling and to PKA-mediated phosphorylation of KSR1, leading to the activation of downstream MAP kinases, such as MAPK1 or MAPK3. Functions as a scaffold protein that anchors cAMP-dependent protein kinase (PKA) and PRKD1. This promotes activation of PRKD1, leading to increased phosphorylation of HDAC5 and ultimately cardiomyocyte hypertrophy. Has no guanine nucleotide exchange activity on CDC42, Ras or Rac. Required for normal embryonic heart development, and in particular for normal sarcomere formation in the developing cardiomyocytes. Plays a role in cardiomyocyte growth and cardiac hypertrophy in response to activation of the beta-adrenergic receptor by phenylephrine or isoproterenol. Required for normal adaptive cardiac hypertrophy in response to pressure overload. Plays a role in osteogenesis. This Homo sapiens (Human) protein is A-kinase anchor protein 13 (AKAP13).